The chain runs to 183 residues: Small ribosomal subunit protein uS4 (183 aa).

The S4 RNA-binding domain occupies 106–168 (RRLQTQVYRQ…AGSPLAREGH (63 aa)).

This sequence belongs to the universal ribosomal protein uS4 family. As to quaternary structure, part of the 30S ribosomal subunit. Contacts protein S5. The interaction surface between S4 and S5 is involved in control of translational fidelity.

Functionally, one of the primary rRNA binding proteins, it binds directly to 16S rRNA where it nucleates assembly of the body of the 30S subunit. In terms of biological role, with S5 and S12 plays an important role in translational accuracy. The chain is Small ribosomal subunit protein uS4 from Methanothrix thermoacetophila (strain DSM 6194 / JCM 14653 / NBRC 101360 / PT) (Methanosaeta thermophila).